Reading from the N-terminus, the 266-residue chain is Regulatory protein RecX (266 aa).

It belongs to the RecX family.

It is found in the cytoplasm. Functionally, modulates RecA activity. The polypeptide is Regulatory protein RecX (Enterococcus faecalis (strain ATCC 700802 / V583)).